The primary structure comprises 323 residues: Transaldolase (323 aa).

Lys131 functions as the Schiff-base intermediate with substrate in the catalytic mechanism.

It belongs to the transaldolase family. Type 1 subfamily. In terms of assembly, homodimer.

The protein resides in the cytoplasm. The enzyme catalyses D-sedoheptulose 7-phosphate + D-glyceraldehyde 3-phosphate = D-erythrose 4-phosphate + beta-D-fructose 6-phosphate. Its pathway is carbohydrate degradation; pentose phosphate pathway; D-glyceraldehyde 3-phosphate and beta-D-fructose 6-phosphate from D-ribose 5-phosphate and D-xylulose 5-phosphate (non-oxidative stage): step 2/3. In terms of biological role, transaldolase is important for the balance of metabolites in the pentose-phosphate pathway. The protein is Transaldolase of Blochmanniella floridana.